Consider the following 251-residue polypeptide: Dihydroorotate dehydrogenase B (NAD(+)), electron transfer subunit homolog (251 aa).

Positions 2-101 constitute an FAD-binding FR-type domain; that stretch reads LAELNAEVLE…FLPLGKRLFS (100 aa). Positions 217, 222, 225, and 238 each coordinate [2Fe-2S] cluster.

It belongs to the PyrK family. [2Fe-2S] cluster is required as a cofactor. It depends on FAD as a cofactor.

The sequence is that of Dihydroorotate dehydrogenase B (NAD(+)), electron transfer subunit homolog from Aquifex aeolicus (strain VF5).